A 274-amino-acid chain; its full sequence is Diaminopimelate epimerase (274 aa).

The substrate site is built by Asn-11, Gln-44, and Asn-64. The active-site Proton donor is the Cys-73. Residues 74–75, Asn-157, Asn-190, and 208–209 contribute to the substrate site; these read GN and ER. The Proton acceptor role is filled by Cys-217. 218–219 is a substrate binding site; that stretch reads GS.

Belongs to the diaminopimelate epimerase family. As to quaternary structure, homodimer.

It localises to the cytoplasm. It carries out the reaction (2S,6S)-2,6-diaminopimelate = meso-2,6-diaminopimelate. Its pathway is amino-acid biosynthesis; L-lysine biosynthesis via DAP pathway; DL-2,6-diaminopimelate from LL-2,6-diaminopimelate: step 1/1. Catalyzes the stereoinversion of LL-2,6-diaminopimelate (L,L-DAP) to meso-diaminopimelate (meso-DAP), a precursor of L-lysine and an essential component of the bacterial peptidoglycan. The polypeptide is Diaminopimelate epimerase (Actinobacillus pleuropneumoniae serotype 7 (strain AP76)).